The chain runs to 679 residues: WD repeat-containing protein 48 homolog (679 aa).

WD repeat units lie at residues 26–65 (QHRN…NEKY), 71–110 (HHND…CMST), 113–152 (THRD…ALTA), 164–203 (GSKD…RSMK), 206–245 (GHTE…CIQT), 248–287 (VHKE…NKML), 290–329 (EEKA…RCVL), and 349–388 (KGGA…KKEE). The tract at residues 594-615 (PSAGNANNSLQNSQSDANSEGS) is disordered.

This sequence belongs to the WD repeat WDR48 family. As to quaternary structure, catalytic component of the Usp12-46 deubiquitylase complex consisting of Usp12-46, Wdr20 and Uaf1; regulatory subunit that, together wtih Wdr20, stabilizes Usp12-46. The Usp12-46 deubiquitylase complex associates with arr/arrow; the interaction leads to deubiquitination and stabilization of arr/arrow.

In terms of biological role, regulatory component of the Usp12-46 deubiquitylase complex. activates deubiquitination by increasing the catalytic turnover without increasing the affinity of deubiquitinating enzymes for the substrate. The complex deubiquitylates the wg/wingless-signaling receptor arr/arrow, which stabilizes the receptor and increases its concentration at the cell surface; this enhances the sensitivity of cells to wg/wingless-signal stimulation. This increases the amplitude and spatial range of the signaling response to the wg/wingless morphogen gradient, facilitating the precise concentration-dependent regulation of its target genes. Together with Wdr20 and Usp12-46 required for wg/wingless-mediated signaling in the wing imaginal disc and for wg/wingless-dependent regulation of intestinal stem cell proliferation. This chain is WD repeat-containing protein 48 homolog, found in Drosophila mojavensis (Fruit fly).